Consider the following 95-residue polypeptide: Large ribosomal subunit protein uL23 (95 aa).

It belongs to the universal ribosomal protein uL23 family. In terms of assembly, part of the 50S ribosomal subunit. Contacts protein L29, and trigger factor when it is bound to the ribosome.

In terms of biological role, one of the early assembly proteins it binds 23S rRNA. One of the proteins that surrounds the polypeptide exit tunnel on the outside of the ribosome. Forms the main docking site for trigger factor binding to the ribosome. In Geobacillus thermodenitrificans (strain NG80-2), this protein is Large ribosomal subunit protein uL23.